A 340-amino-acid chain; its full sequence is Replication factor C subunit 3 (340 aa).

Serine 2 is subject to N-acetylserine. ATP is bound by residues 16 to 19 (VEKY), arginine 20, tyrosine 28, 53 to 61 (GPPGTGKTS), asparagine 148, and arginine 206.

Belongs to the activator 1 small subunits family. In terms of assembly, replication factor C (RFC) is a heteropentamer of subunits RFC1, RFC2, RFC3, RFC4 and RFC5 and forms a complex with POL30/PCNA in the presence of ATP. Component of the RAD24-RFC complex which consists of RAD14, RFC2, RFC3, RFC4 and RFC5 and associates with the checkpoint clamp DDC1:MEC3:RAD17 complex. Component of the ELG1-RFC complex which consists of ELG1, RFC2, RFC3, RFC4 and RFC5. Component of the CTF18-RFC complex, which consists of CTF18, CTF8, DCC1, RFC2, RFC3, RFC4 and RFC5. RFC3 interacts with ECO1 and POL30/PCNA.

The protein resides in the nucleus. Component of ATP-dependent clamp loader (RFC and RFC-like) complexes for DNA clamps, such as the POL30/PCNA homotrimer and the checkpoint clamp DDC1:MEC3:RAD17 complex. During a clamp loading circle, the RFC:clamp complex binds to DNA and the recognition of the double-stranded/single-stranded junction stimulates ATP hydrolysis by RFC. The complex presumably provides bipartite ATP sites in which one subunit supplies a catalytic site for hydrolysis of ATP bound to the neighboring subunit. Dissociation of RFC from the clamp leaves the clamp encircling DNA. Component of the replication factor C (RFC or activator 1) complex which loads POL30/PCNA and acts during elongation of primed DNA templates by DNA polymerase delta and epsilon. RFC has an essential but redundant activity in sister chromatid cohesion establishment. Component of the RFC-like complex CTF18-RFC which is required for efficient establishment of chromosome cohesion during S-phase and may load or unload POL30/PCNA. Component of the RFC-like RAD24-RFC complex which loads the checkpoint clamp DDC1:MEC3:RAD17 complex and is involved in DNA repair pathways. Component of the RFC-like ELG1-RFC complex which appears to have a role in DNA replication, replication fork re-start, recombination and repair. RFC3 supplies a catalytic site to the ATP site of RFC4. The sequence is that of Replication factor C subunit 3 (RFC3) from Saccharomyces cerevisiae (strain ATCC 204508 / S288c) (Baker's yeast).